A 246-amino-acid polypeptide reads, in one-letter code: uncharacterized protein (246 aa).

This sequence belongs to the BtpA family.

This is an uncharacterized protein from Archaeoglobus fulgidus (strain ATCC 49558 / DSM 4304 / JCM 9628 / NBRC 100126 / VC-16).